The following is a 562-amino-acid chain: Probable malate:quinone oxidoreductase (562 aa).

Positions 530 to 562 (EVPDKSATPTDPTIAPKHQHSTTHNANSEMQAL) are disordered. Residues 551–562 (TTHNANSEMQAL) are compositionally biased toward polar residues.

Belongs to the MQO family. FAD serves as cofactor.

The enzyme catalyses (S)-malate + a quinone = a quinol + oxaloacetate. It functions in the pathway carbohydrate metabolism; tricarboxylic acid cycle; oxaloacetate from (S)-malate (quinone route): step 1/1. In Xylella fastidiosa (strain M12), this protein is Probable malate:quinone oxidoreductase.